We begin with the raw amino-acid sequence, 405 residues long: Aurora kinase A (405 aa).

2 stretches are compositionally biased toward polar residues: residues valine 32 to alanine 82 and arginine 91 to asparagine 110. The tract at residues valine 32 to arginine 127 is disordered. Phosphoserine occurs at positions 42 and 52. Residues serine 111–arginine 127 show a composition bias toward basic and acidic residues. The Protein kinase domain occupies phenylalanine 134–isoleucine 384. ATP-binding positions include lysine 144, lysine 163, and glutamate 212–alanine 214. Aspartate 257 acts as the Proton acceptor in catalysis. Residue lysine 259 forms a Glycyl lysine isopeptide (Lys-Gly) (interchain with G-Cter in SUMO2) linkage. ATP-binding positions include glutamate 261 to asparagine 262 and aspartate 275. The segment at histidine 281–leucine 294 is activation segment. 2 positions are modified to phosphothreonine: threonine 288 and threonine 289. The residue at position 343 (serine 343) is a Phosphoserine. Residues methionine 385–serine 405 form a disordered region. The span at lysine 396–serine 405 shows a compositional bias: basic and acidic residues.

The protein belongs to the protein kinase superfamily. Ser/Thr protein kinase family. Aurora subfamily. In terms of assembly, part of a complex composed of NEDD9, AURKA and CTTN; within the complex NEDD9 acts as a scaffold protein and is required for complex formation. Identified in a complex with AUNIP and NIN. Interacts with FBXL7. Interacts with CPEB1, JTB, TACC1, TPX2, PPP2CA, as well as with the protein phosphatase type 1 (PP1) isoforms PPP1CA, PPP1CB and PPP1CC. Also interacts with its substrates ARHGEF2, BORA, KIF2A, PARD3, and p53/TP53. Interaction with BORA promotes phosphorylation of PLK1. Interacts with CIMAP3. Interacts with GADD45A, competing with its oligomerization. Interacts (via C-terminus) with AUNIP (via C-terminus). Interacts with FRY; this interaction facilitates AURKA-mediated PLK1 phosphorylation. Interacts with SIRT2. Interacts with MYCN; interaction is phospho-independent and triggers AURKA activation; AURKA competes with FBXW7 for binding to unphosphorylated MYCN but not for binding to phosphorylated MYCN. Interacts with HNRNPU. Interacts with AAAS. Interacts with KLHL18 and CUL3. Interacts with FOXP1. Interacts with HDAC6; AURKA-mediated phosphorylation of HDAC6 promotes deacetylation of alpha-tubulin. Activated by phosphorylation at Thr-289; this brings about a change in the conformation of the activation segment. Phosphorylation at Thr-289 varies during the cell cycle and is highest during M phase. Autophosphorylated at Thr-289 upon TPX2 binding. Thr-289 can be phosphorylated by several kinases, including PAK and PKA. Protein phosphatase type 1 (PP1) binds AURKA and inhibits its activity by dephosphorylating Thr-289 during mitosis. Phosphorylation at Ser-343 decreases the kinase activity. PPP2CA controls degradation by dephosphorylating Ser-52 at the end of mitosis. Post-translationally, ubiquitinated by the E3 ubiquitin-protein ligase complex SCF(FBXL7) during mitosis, leading to its degradation by the proteasome. Ubiquitinated by CHFR, leading to its degradation by the proteasome. Ubiquitinated by the anaphase-promoting complex (APC), leading to its degradation by the proteasome. Ubiquitinated by the CUL3-KLHL18 ligase leading to its activation at the centrosome which is required for initiating mitotic entry. Ubiquitination mediated by CUL3-KLHL18 ligase does not lead to its degradation by the proteasome.

The protein localises to the cytoplasm. The protein resides in the cytoskeleton. It localises to the microtubule organizing center. It is found in the centrosome. Its subcellular location is the spindle pole. The protein localises to the centriole. The protein resides in the cell projection. It localises to the neuron projection. It is found in the cilium. Its subcellular location is the cilium basal body. The protein localises to the basolateral cell membrane. The enzyme catalyses L-seryl-[protein] + ATP = O-phospho-L-seryl-[protein] + ADP + H(+). It carries out the reaction L-threonyl-[protein] + ATP = O-phospho-L-threonyl-[protein] + ADP + H(+). Activation of CDK1, appears to be an upstream event of AURKA activation. Phosphatase inhibitor-2 (PPP1R2) and TPX2 act also as activators. Inactivated by the G2 checkpoint. Inhibited by GADD45A and p53/TP53, and through dephosphorylation by protein phosphatase type 1 (PP1). MLN8054 is also a potent and selective inhibitor. Activated during the early phase of cilia disassembly in the presence of CIMAP3. Inhibited by the small molecule inhibitor VX-680. In terms of biological role, mitotic serine/threonine kinase that contributes to the regulation of cell cycle progression. Associates with the centrosome and the spindle microtubules during mitosis and plays a critical role in various mitotic events including the establishment of mitotic spindle, centrosome duplication, centrosome separation as well as maturation, chromosomal alignment, spindle assembly checkpoint, and cytokinesis. Required for normal spindle positioning during mitosis and for the localization of NUMA1 and DCTN1 to the cell cortex during metaphase. Required for initial activation of CDK1 at centrosomes. Phosphorylates numerous target proteins, including ARHGEF2, BORA, BRCA1, CDC25B, DLGP5, HDAC6, KIF2A, LATS2, NDEL1, PARD3, PPP1R2, PLK1, RASSF1, TACC3, p53/TP53 and TPX2. Phosphorylates MCRS1 which is required for MCRS1-mediated kinetochore fiber assembly and mitotic progression. Regulates KIF2A tubulin depolymerase activity. Important for microtubule formation and/or stabilization. Required for normal axon formation. Plays a role in microtubule remodeling during neurite extension. Also acts as a key regulatory component of the p53/TP53 pathway, and particularly the checkpoint-response pathways critical for oncogenic transformation of cells, by phosphorylating and destabilizing p53/TP53. Phosphorylates its own inhibitors, the protein phosphatase type 1 (PP1) isoforms, to inhibit their activity. Inhibits cilia outgrowth. Required for cilia disassembly via phosphorylation of HDAC6 and subsequent deacetylation of alpha-tubulin. Regulates protein levels of the anti-apoptosis protein BIRC5 by suppressing the expression of the SCF(FBXL7) E3 ubiquitin-protein ligase substrate adapter FBXL7 through the phosphorylation of the transcription factor FOXP1. The protein is Aurora kinase A of Canis lupus familiaris (Dog).